The chain runs to 679 residues: Protein hook (679 aa).

Positions 6 to 123 constitute a Calponin-homology (CH) domain; sequence NEMYYSLLEW…RLLQLVLGCA (118 aa). 2 coiled-coil regions span residues 135–437 and 480–574; these read EIMC…LKCG and QTAL…QEIL.

Belongs to the hook family. Homodimer. Interacts with microtubules via its N-terminus.

It is found in the cytoplasm. It localises to the cytoskeleton. Its subcellular location is the endosome. The protein localises to the synapse. Involved in endocytic trafficking by stabilizing organelles of the endocytic pathway. Probably acts as a cytoskeletal linker protein required to tether endosome vesicles to the cytoskeleton. Involved in modulation of endocytosis at stages required for down-regulation of membrane proteins that control synapse size. Not involved in synaptic vesicle recycling. Required in R7 cells for boss endocytosis into multivesicular bodies (MVBs). Has a role in regulating adult longevity. The protein is Protein hook of Drosophila yakuba (Fruit fly).